The following is a 670-amino-acid chain: DNA ligase (670 aa).

NAD(+)-binding positions include 34–38, 83–84, and E117; these read DAEYD and SL. Catalysis depends on K119, which acts as the N6-AMP-lysine intermediate. NAD(+) is bound by residues R140, E177, K293, and K317. Zn(2+)-binding residues include C411, C414, C429, and C434. Residues 591–670 enclose the BRCT domain; that stretch reads KVGGRFTGKT…DEFLAMLEEG (80 aa).

It belongs to the NAD-dependent DNA ligase family. LigA subfamily. Mg(2+) is required as a cofactor. Requires Mn(2+) as cofactor.

The catalysed reaction is NAD(+) + (deoxyribonucleotide)n-3'-hydroxyl + 5'-phospho-(deoxyribonucleotide)m = (deoxyribonucleotide)n+m + AMP + beta-nicotinamide D-nucleotide.. Its function is as follows. DNA ligase that catalyzes the formation of phosphodiester linkages between 5'-phosphoryl and 3'-hydroxyl groups in double-stranded DNA using NAD as a coenzyme and as the energy source for the reaction. It is essential for DNA replication and repair of damaged DNA. The sequence is that of DNA ligase from Geobacter sulfurreducens (strain ATCC 51573 / DSM 12127 / PCA).